A 70-amino-acid polypeptide reads, in one-letter code: Pyruvate-flavodoxin oxidoreductase (70 aa).

The protein belongs to the pyruvate:ferredoxin/flavodoxin oxidoreductase family.

It carries out the reaction oxidized [flavodoxin] + pyruvate + CoA + 2 H(+) = reduced [flavodoxin] + acetyl-CoA + CO2. Oxidoreductase required for the transfer of electrons from pyruvate to flavodoxin, which reduces nitrogenase. The protein is Pyruvate-flavodoxin oxidoreductase (nifJ) of Anabaena variabilis.